A 435-amino-acid chain; its full sequence is ATP-dependent protease ATPase subunit HslU (435 aa).

ATP contacts are provided by residues valine 18, 60 to 65, aspartate 248, glutamate 313, and arginine 385; that span reads GVGKTE.

It belongs to the ClpX chaperone family. HslU subfamily. A double ring-shaped homohexamer of HslV is capped on each side by a ring-shaped HslU homohexamer. The assembly of the HslU/HslV complex is dependent on binding of ATP.

Its subcellular location is the cytoplasm. In terms of biological role, ATPase subunit of a proteasome-like degradation complex; this subunit has chaperone activity. The binding of ATP and its subsequent hydrolysis by HslU are essential for unfolding of protein substrates subsequently hydrolyzed by HslV. HslU recognizes the N-terminal part of its protein substrates and unfolds these before they are guided to HslV for hydrolysis. The sequence is that of ATP-dependent protease ATPase subunit HslU from Parvibaculum lavamentivorans (strain DS-1 / DSM 13023 / NCIMB 13966).